A 72-amino-acid chain; its full sequence is UPF0729 protein C18orf32 homolog (72 aa).

Residues Met1 to Pro33 form a necessary for its localzation to the endoplasmic reticulum and lipid droplets region. Residues Thr45–Asp72 are disordered.

Belongs to the UPF0729 family. As to quaternary structure, interacts with DERL1 and AMFR. Post-translationally, undergoes ER-associated degradation (ERAD).

It is found in the endoplasmic reticulum. It localises to the lipid droplet. Its function is as follows. May activate the NF-kappa-B signaling pathway. This chain is UPF0729 protein C18orf32 homolog, found in Rattus norvegicus (Rat).